The chain runs to 727 residues: Glucans biosynthesis glucosyltransferase H (727 aa).

The tract at residues 18–41 (SAMPNERPGAMEPQKLSKMPEGFP) is disordered. Transmembrane regions (helical) follow at residues 58–78 (FLVV…MGAV), 97–117 (VNFC…LILL), 278–298 (LQQF…GWWV), 408–428 (IMAY…LMLA), 460–480 (LFYI…LLLL), 496–516 (IFSV…MMFI), and 572–592 (LLAW…ISAW).

This sequence belongs to the glycosyltransferase 2 family. OpgH subfamily.

It is found in the cell inner membrane. Its pathway is glycan metabolism; osmoregulated periplasmic glucan (OPG) biosynthesis. Functionally, involved in the biosynthesis of osmoregulated periplasmic glucans (OPGs). This is Glucans biosynthesis glucosyltransferase H from Shewanella baltica (strain OS155 / ATCC BAA-1091).